We begin with the raw amino-acid sequence, 224 residues long: Ribonuclease HII (224 aa).

One can recognise an RNase H type-2 domain in the interval 36–224 (RGVAGVDEVG…RRSFLRRFLG (189 aa)). The a divalent metal cation site is built by Asp42, Glu43, and Asp138.

It belongs to the RNase HII family. Mn(2+) serves as cofactor. Requires Mg(2+) as cofactor.

It localises to the cytoplasm. It catalyses the reaction Endonucleolytic cleavage to 5'-phosphomonoester.. Its function is as follows. Endonuclease that specifically degrades the RNA of RNA-DNA hybrids. This chain is Ribonuclease HII, found in Parasynechococcus marenigrum (strain WH8102).